A 293-amino-acid chain; its full sequence is MNFVTTLTYLLPHRMLSSLARHIAYCQHPLIKQWLIDTVIAKFDVNLSEAAEPDAHAYPSFNAFFTRSLKAGIRLPDPNPDTLLMPADGRISQLGPIREGRIFQAKGQSFTATELLGDTAAASAFTNGLFATVYLSPRDYHRVHMPCTGQLLKTVHVPGRLFSVGPDAVRQIPRLFARNERLVCHFDTAFGPMVLVMVGALLVSGVETVWGGVEIPAYGDRITHKDYQGRNIAIERFAEMARFNYGSTVIVLLPPNVFTLAPHLTAESPVTLGQALAHRLSLNHSTQAPTQEK.

Active-site charge relay system; for autoendoproteolytic cleavage activity residues include Asp-88, His-144, and Ser-247. The Schiff-base intermediate with substrate; via pyruvic acid; for decarboxylase activity role is filled by Ser-247. Ser-247 carries the pyruvic acid (Ser); by autocatalysis modification.

This sequence belongs to the phosphatidylserine decarboxylase family. PSD-B subfamily. Prokaryotic type I sub-subfamily. As to quaternary structure, heterodimer of a large membrane-associated beta subunit and a small pyruvoyl-containing alpha subunit. Pyruvate is required as a cofactor. Is synthesized initially as an inactive proenzyme. Formation of the active enzyme involves a self-maturation process in which the active site pyruvoyl group is generated from an internal serine residue via an autocatalytic post-translational modification. Two non-identical subunits are generated from the proenzyme in this reaction, and the pyruvate is formed at the N-terminus of the alpha chain, which is derived from the carboxyl end of the proenzyme. The autoendoproteolytic cleavage occurs by a canonical serine protease mechanism, in which the side chain hydroxyl group of the serine supplies its oxygen atom to form the C-terminus of the beta chain, while the remainder of the serine residue undergoes an oxidative deamination to produce ammonia and the pyruvoyl prosthetic group on the alpha chain. During this reaction, the Ser that is part of the protease active site of the proenzyme becomes the pyruvoyl prosthetic group, which constitutes an essential element of the active site of the mature decarboxylase.

Its subcellular location is the cell membrane. The enzyme catalyses a 1,2-diacyl-sn-glycero-3-phospho-L-serine + H(+) = a 1,2-diacyl-sn-glycero-3-phosphoethanolamine + CO2. It participates in phospholipid metabolism; phosphatidylethanolamine biosynthesis; phosphatidylethanolamine from CDP-diacylglycerol: step 2/2. Functionally, catalyzes the formation of phosphatidylethanolamine (PtdEtn) from phosphatidylserine (PtdSer). This chain is Phosphatidylserine decarboxylase proenzyme, found in Xylella fastidiosa (strain M12).